The chain runs to 149 residues: Large ribosomal subunit protein bL9 (149 aa).

This sequence belongs to the bacterial ribosomal protein bL9 family.

Binds to the 23S rRNA. The sequence is that of Large ribosomal subunit protein bL9 from Pasteurella multocida (strain Pm70).